Reading from the N-terminus, the 384-residue chain is Centrosomal protein of 44 kDa (384 aa).

A binds with microtubules and centrioles region spans residues 11 to 188 (RKLEQRLRTL…TKCYSSALVE (178 aa)). The disordered stretch occupies residues 191–222 (EEEEPTSDSEGGSHLEHEMESPFETAETTPNS). Residues 201-210 (GGSHLEHEME) show a composition bias toward basic and acidic residues. Coiled coils occupy residues 221-260 (NSEQ…KGKI) and 353-378 (TEDS…SKLL).

As to quaternary structure, binds to centriolar microtubules.

The protein localises to the cytoplasm. The protein resides in the cytoskeleton. It is found in the microtubule organizing center. Its subcellular location is the centrosome. It localises to the centriole. The protein localises to the spindle pole. The protein resides in the midbody. Its function is as follows. Centriole-enriched microtubule-binding protein involved in centriole biogenesis. In collaboration with CEP295 and POC1B, is required for the centriole-to-centrosome conversion by ensuring the formation of bona fide centriole wall. Functions as a linker component that maintains centrosome cohesion. Associates with CROCC and regulates its stability and localization to the centrosome. The polypeptide is Centrosomal protein of 44 kDa (cep44) (Xenopus laevis (African clawed frog)).